A 615-amino-acid polypeptide reads, in one-letter code: Cilia- and flagella-associated protein 52 (615 aa).

11 WD repeats span residues 54–98 (GHSD…LIHR), 101–142 (LHKV…AICG), 145–184 (CNTNFTNCVKFFNNSPDKLITAGNFNMNVWTYDAGNNKLR), 232–275 (GPAK…AGTK), 320–359 (AHNDKINGMAFPNEYSEVFATCGTGFIRLWHLTTCRELLR), 362–401 (VPNLECFCIAFTTDGSAILSGWSDGKIRAFGPQSGKIIFT), 405–444 (AHQKAVTAIASTADSSRILSGGEEGMVRVWRIGRTSQTLE), 449–488 (DHKGPVNCIRIKGSGDECVSASSDGSCILWDLHTFKRRTS), 490–529 (FANTFFKSVVYHPDESQLVTAGTDRKVTYWDAYDGNAIRI), 533–572 (SDLDEVNALAVDRDGEALVSGGGDKLVKLWGYDEGHCYFV), and 575–614 (AHSGAITAVGVTPDKQRIVSVGTEGGIFIWDYQRPQTLAD).

It belongs to the CFAP52 family.

The protein resides in the cytoplasm. It is found in the cell projection. It localises to the cilium. The protein localises to the flagellum. Its function is as follows. May play a role in cell growth and/or survival. The polypeptide is Cilia- and flagella-associated protein 52 (Chlamydomonas reinhardtii (Chlamydomonas smithii)).